The primary structure comprises 432 residues: D-amino acid dehydrogenase 1 (432 aa).

Residue 3–17 (VLVLGSGVIGTASAY) participates in FAD binding. The tract at residues 410-432 (GLDISRYSNSPENAKNAHPAPAH) is disordered.

Belongs to the DadA oxidoreductase family. FAD serves as cofactor.

It carries out the reaction a D-alpha-amino acid + A + H2O = a 2-oxocarboxylate + AH2 + NH4(+). It participates in amino-acid degradation; D-alanine degradation; NH(3) and pyruvate from D-alanine: step 1/1. Functionally, catalyzes the oxidative deamination of D-amino acids. Has very broad substrate specificity; all the D-amino acids tested can be used as the substrate except D-Glu and D-Gln. Participates in the utilization of several D-amino acids as the sole source of nitrogen, i.e. D-alanine, D-histidine, D-phenylalanine, D-serine, D-threonine, and D-valine. This Pseudomonas aeruginosa (strain ATCC 15692 / DSM 22644 / CIP 104116 / JCM 14847 / LMG 12228 / 1C / PRS 101 / PAO1) protein is D-amino acid dehydrogenase 1 (dadA1).